The primary structure comprises 500 residues: Keratin, type II cuticular Hb1 (500 aa).

The interval 1 to 106 (MTCGSGFRGR…PNAQCVKQEE (106 aa)) is head. The IF rod domain occupies 106 to 417 (EKEQIKCLNN…RLLEGEEQRL (312 aa)). The segment at 107 to 141 (KEQIKCLNNRFAAFIDKVRFLEQQNKLLETKLQFY) is coil 1A. A linker 1 region spans residues 142 to 151 (QNRQCCESNL). The tract at residues 152–252 (EPLFNGYIET…YEEEIRVLQA (101 aa)) is coil 1B. Residue lysine 212 forms a Glycyl lysine isopeptide (Lys-Gly) (interchain with G-Cter in SUMO1) linkage. A linker 12 region spans residues 253–269 (HISDTSVIVKMDNSRDL). The tract at residues 270-413 (NMDNIVAEIK…ATYRRLLEGE (144 aa)) is coil 2. A tail region spans residues 414–500 (EQRLCEGVGS…GSCASVCRKC (87 aa)).

It belongs to the intermediate filament family. In terms of assembly, heterotetramer of two type I and two type II keratins.

The protein is Keratin, type II cuticular Hb1 of Bos taurus (Bovine).